A 233-amino-acid chain; its full sequence is Large ribosomal subunit protein uL22m (233 aa).

It belongs to the universal ribosomal protein uL22 family. Component of the mitochondrial ribosome large subunit (39S) which comprises a 16S rRNA and about 50 distinct proteins.

The protein resides in the mitochondrion. This Drosophila melanogaster (Fruit fly) protein is Large ribosomal subunit protein uL22m (mRpL22).